The primary structure comprises 36 residues: Pancreatic polypeptide (36 aa).

At Y36 the chain carries Tyrosine amide.

This sequence belongs to the NPY family.

The protein resides in the secreted. Hormone secreted by pancreatic cells that acts as a regulator of pancreatic and gastrointestinal functions probably by signaling through the G protein-coupled receptor NPY4R2. The chain is Pancreatic polypeptide (PPY) from Tapirus pinchaque (Mountain tapir).